The primary structure comprises 1104 residues: Mitogen-activated protein kinase kinase kinase 9 (1104 aa).

Over residues 12 to 22 (ASAAAAAPPGE) the composition is skewed to low complexity. Positions 12-47 (ASAAAAAPPGEDGAGAGAEEEEEEEEEAAAAVGPGE) are disordered. The span at 29–39 (AEEEEEEEEEA) shows a compositional bias: acidic residues. Residues 52–116 (APLPYWTAVF…PSNYVTPRSA (65 aa)) enclose the SH3 domain. Residues 144–412 (LTLEEIIGIG…LTTIEESGFF (269 aa)) enclose the Protein kinase domain. ATP is bound by residues 150-158 (IGIGGFGKV) and K171. D268 acts as the Proton acceptor in catalysis. T304 and T305 each carry phosphothreonine; by autocatalysis. S308 bears the Phosphoserine; by autocatalysis mark. Position 312 is a phosphothreonine; by autocatalysis (T312). Leucine-zipper stretches follow at residues 430–451 (IQEM…EEEL) and 465–486 (LRRR…ELNI). Disordered stretches follow at residues 532–636 (ASPT…PHFH), 675–742 (MEDE…LKRG), 781–819 (EEPE…FKKE), and 890–1038 (RDPN…CFAS). S533 carries the post-translational modification Phosphoserine. Polar residues-rich tracts occupy residues 566-575 (PGESSKTWGR) and 723-739 (PVNS…TNSL). Residues 785–797 (PPAREEKKRREGL) show a composition bias toward basic and acidic residues. Positions 893-910 (NQSLTPTHVTLTTPSQPS) are enriched in polar residues. Low complexity predominate over residues 929–944 (SRSPSSNGLSPSPGAG). Positions 1014–1038 (HARSTSPANSSSTETPSNLDSCFAS) are enriched in polar residues.

It belongs to the protein kinase superfamily. STE Ser/Thr protein kinase family. MAP kinase kinase kinase subfamily. Homodimer. Requires Mg(2+) as cofactor. Post-translationally, autophosphorylation on serine and threonine residues within the activation loop plays a role in enzyme activation. Thr-312 is likely to be the main autophosphorylation site. Autophosphorylation also occurs on Thr-304 and Ser-308. In terms of tissue distribution, expressed in epithelial tumor cell lines of colonic, breast and esophageal origin.

The catalysed reaction is L-seryl-[protein] + ATP = O-phospho-L-seryl-[protein] + ADP + H(+). It catalyses the reaction L-threonyl-[protein] + ATP = O-phospho-L-threonyl-[protein] + ADP + H(+). Homodimerization via the leucine zipper domains is required for autophosphorylation of multiple sites in the activation loop and subsequent activation. Autophosphorylation at Thr-312 is the key step in activation of MAP3K9/MLK1 and is required for full phosphorylation. Autophosphorylation at Thr-304 and Ser-308 have been shown to be of secondary importance in the activation of MAP3K9/MLK1. CEP-1347 and many indolocarbazole analogs have been shown to act as inhibitors of MAP3K9/MLK1 activity. In terms of biological role, serine/threonine kinase which acts as an essential component of the MAP kinase signal transduction pathway. Plays an important role in the cascades of cellular responses evoked by changes in the environment. Once activated, acts as an upstream activator of the MKK/JNK signal transduction cascade through the phosphorylation of MAP2K4/MKK4 and MAP2K7/MKK7 which in turn activate the JNKs. The MKK/JNK signaling pathway regulates stress response via activator protein-1 (JUN) and GATA4 transcription factors. Also plays a role in mitochondrial death signaling pathway, including the release cytochrome c, leading to apoptosis. The polypeptide is Mitogen-activated protein kinase kinase kinase 9 (MAP3K9) (Homo sapiens (Human)).